Reading from the N-terminus, the 101-residue chain is MAKTSAIERNLKRARLAKRYAAKREQLKAIARNQELPVEERFAAQLKLAELPRNSAVTRIRNRCEITGRPRAFYRKFRMSRIAMRDYASQGMIPGMVKSSW.

This sequence belongs to the universal ribosomal protein uS14 family. Part of the 30S ribosomal subunit. Contacts proteins S3 and S10.

Binds 16S rRNA, required for the assembly of 30S particles and may also be responsible for determining the conformation of the 16S rRNA at the A site. The chain is Small ribosomal subunit protein uS14 from Maricaulis maris (strain MCS10) (Caulobacter maris).